The sequence spans 507 residues: ATP synthase subunit alpha, chloroplastic (507 aa).

ATP is bound at residue 170–177 (GDRQTGKT).

This sequence belongs to the ATPase alpha/beta chains family. In terms of assembly, F-type ATPases have 2 components, CF(1) - the catalytic core - and CF(0) - the membrane proton channel. CF(1) has five subunits: alpha(3), beta(3), gamma(1), delta(1), epsilon(1). CF(0) has four main subunits: a, b, b' and c.

The protein resides in the plastid. The protein localises to the chloroplast thylakoid membrane. The catalysed reaction is ATP + H2O + 4 H(+)(in) = ADP + phosphate + 5 H(+)(out). In terms of biological role, produces ATP from ADP in the presence of a proton gradient across the membrane. The alpha chain is a regulatory subunit. The polypeptide is ATP synthase subunit alpha, chloroplastic (Liriodendron tulipifera (Tuliptree)).